The following is a 183-amino-acid chain: Peptide deformylase (183 aa).

2 residues coordinate Fe cation: C110 and H153. Residue E154 is part of the active site. H157 contributes to the Fe cation binding site.

This sequence belongs to the polypeptide deformylase family. Requires Fe(2+) as cofactor.

The catalysed reaction is N-terminal N-formyl-L-methionyl-[peptide] + H2O = N-terminal L-methionyl-[peptide] + formate. Removes the formyl group from the N-terminal Met of newly synthesized proteins. Requires at least a dipeptide for an efficient rate of reaction. N-terminal L-methionine is a prerequisite for activity but the enzyme has broad specificity at other positions. The sequence is that of Peptide deformylase from Listeria monocytogenes serotype 4a (strain HCC23).